We begin with the raw amino-acid sequence, 242 residues long: Uridylate kinase (242 aa).

17 to 20 (KLSG) contributes to the ATP binding site. Glycine 59 contributes to the UMP binding site. Glycine 60 and arginine 64 together coordinate ATP. UMP contacts are provided by residues aspartate 79 and 140–147 (TGNPFFTT). ATP is bound by residues threonine 167, tyrosine 173, and aspartate 176.

This sequence belongs to the UMP kinase family. In terms of assembly, homohexamer.

Its subcellular location is the cytoplasm. The catalysed reaction is UMP + ATP = UDP + ADP. It functions in the pathway pyrimidine metabolism; CTP biosynthesis via de novo pathway; UDP from UMP (UMPK route): step 1/1. With respect to regulation, inhibited by UTP. Functionally, catalyzes the reversible phosphorylation of UMP to UDP. This chain is Uridylate kinase, found in Marinobacter nauticus (strain ATCC 700491 / DSM 11845 / VT8) (Marinobacter aquaeolei).